The primary structure comprises 164 residues: T-cell surface glycoprotein CD3 zeta chain (164 aa).

Positions 1–21 are cleaved as a signal peptide; sequence MKWKVSVLACILHVRFPGAEA. Gln22 is modified (blocked amino end (Gln)). Residues 22–30 are Extracellular-facing; the sequence is QSFGLLDPK. The helical transmembrane segment at 31 to 51 threads the bilayer; that stretch reads LCYLLDGILFIYGVIITALYL. The Cytoplasmic segment spans residues 52 to 164; sequence RAKFSRSAET…ALHMQTLAPR (113 aa). The residue at position 58 (Ser58) is a Phosphoserine. ITAM domains lie at 61-89, 100-128, and 131-159; these read TAANLQDPNQLYNELNLGRREEYDVLEKK, QQRRRNPQEGVYNALQKDKMAEAYSEIGT, and ERRRGKGHDGLYQGLSTATKDTYDALHMQ. A phosphotyrosine mark is found at Tyr72 and Tyr83. Residues 87 to 96 are compositionally biased toward basic and acidic residues; the sequence is EKKRARDPEM. A disordered region spans residues 87–111; sequence EKKRARDPEMGGKQQRRRNPQEGVY. A phosphotyrosine mark is found at Tyr111, Tyr123, Tyr142, and Tyr153. The disordered stretch occupies residues 124 to 143; it reads SEIGTKGERRRGKGHDGLYQ.

It belongs to the CD3Z/FCER1G family. In terms of assembly, the TCR-CD3 complex is composed of a CD3D/CD3E and a CD3G/CD3E heterodimers that preferentially associate with TCRalpha and TCRbeta, respectively, to form TCRalpha/CD3E/CD3G and TCRbeta/CD3G/CD3E trimers. In turn, the hexamer interacts with CD3Z homodimer to form the TCR-CD3 complex. Alternatively, TCRalpha and TCRbeta can be replaced by TCRgamma and TCRdelta. Interacts with SLA. Interacts with SLA2. Interacts with TRAT1. Interacts with DOCK2. Interacts with SHB. Interacts with ZAP70. Interacts (tyrosine phosphorylated) with SHC1 (via SH2 domain). Interacts with PTPRC. Interacts with CRK; this interaction regulates CD3Z phosphorylation. Interacts (on T cell side) with CD81, ICAM1 and CD9 at immunological synapses between antigen-presenting cells and T cells. Interacts with CD160. Interacts with LY6E. Interacts with LY6E. The signaling subunit of immunoglobulin gamma (IgG) Fc receptor complex. As a homodimer or a heterodimer with FCER1G, associates with the ligand binding subunit FCGR3A (via transmembrane domain); this interaction is a prerequisite for Fc receptor complex expression on the cell surface. Interacts with CD5. Post-translationally, phosphorylated on Tyr residues after T-cell receptor triggering by LCK in association with CD4/CD8. As to expression, CD3Z is expressed in normal lymphoid tissue and in peripheral blood mononuclear cells (PBMCs). Expressed also in retinal ganglion cells.

Its subcellular location is the cell membrane. Part of the TCR-CD3 complex present on T-lymphocyte cell surface that plays an essential role in adaptive immune response. When antigen presenting cells (APCs) activate T-cell receptor (TCR), TCR-mediated signals are transmitted across the cell membrane by the CD3 chains CD3D, CD3E, CD3G and CD3Z. All CD3 chains contain immunoreceptor tyrosine-based activation motifs (ITAMs) in their cytoplasmic domain. Upon TCR engagement, these motifs become phosphorylated by Src family protein tyrosine kinases LCK and FYN, resulting in the activation of downstream signaling pathways. CD3Z ITAMs phosphorylation creates multiple docking sites for the protein kinase ZAP70 leading to ZAP70 phosphorylation and its conversion into a catalytically active enzyme. Plays an important role in intrathymic T-cell differentiation. Additionally, participates in the activity-dependent synapse formation of retinal ganglion cells (RGCs) in both the retina and dorsal lateral geniculate nucleus (dLGN). In Mus musculus (Mouse), this protein is T-cell surface glycoprotein CD3 zeta chain (Cd247).